A 365-amino-acid chain; its full sequence is Histidinol-phosphate aminotransferase 2 (365 aa).

Lysine 221 is subject to N6-(pyridoxal phosphate)lysine.

Belongs to the class-II pyridoxal-phosphate-dependent aminotransferase family. Histidinol-phosphate aminotransferase subfamily. As to quaternary structure, homodimer. It depends on pyridoxal 5'-phosphate as a cofactor.

The enzyme catalyses L-histidinol phosphate + 2-oxoglutarate = 3-(imidazol-4-yl)-2-oxopropyl phosphate + L-glutamate. Its pathway is amino-acid biosynthesis; L-histidine biosynthesis; L-histidine from 5-phospho-alpha-D-ribose 1-diphosphate: step 7/9. This chain is Histidinol-phosphate aminotransferase 2 (hisC2), found in Bradyrhizobium diazoefficiens (strain JCM 10833 / BCRC 13528 / IAM 13628 / NBRC 14792 / USDA 110).